The primary structure comprises 382 residues: Small ribosomal subunit protein bS1 homolog (382 aa).

S1 motif domains are found at residues 18–85 (GDVV…LSKR), 103–168 (GHVF…LSHK), 189–257 (GDVV…LSIK), and 274–343 (GDIR…LSIK). Serine 244 carries the post-translational modification Phosphoserine.

It belongs to the bacterial ribosomal protein bS1 family.

The sequence is that of Small ribosomal subunit protein bS1 homolog from Bacillus cereus (strain ATCC 10987 / NRS 248).